Consider the following 427-residue polypeptide: Lipophilic envelope-spanning tunnel protein A (427 aa).

The Cytoplasmic segment spans residues 1–75 (MALNTPQITP…LTRLAAMAFT (75 aa)). Residues 76–96 (MLLLMPFAWGEPLLHIWLLGI) traverse the membrane as a helical segment. Over 97–120 (RIDANVMQGIWQMTKQGDAITGSM) the chain is Periplasmic. A helical membrane pass occupies residues 121–141 (VFFCVIGAPLILVTSIAYLWF). At 142 to 269 (GNRLGMNLRP…RHSLQKCWAA (128 aa)) the chain is on the cytoplasmic side. Residues 270–290 (LLASIVLLLPANLLPISIIYL) form a helical membrane-spanning segment. At 291 to 310 (NGGRQEDTILSGIMSLASSN) the chain is on the periplasmic side. Residues 311 to 331 (IAVAGIVFIASILVPFTKVIV) traverse the membrane as a helical segment. At 332 to 350 (MFTLLLSIHFKCQQGLRTR) the chain is on the cytoplasmic side. Residues 351–371 (ILLLRMVTWIGRWSMLDLFVI) form a helical membrane-spanning segment. Topologically, residues 372 to 382 (SLTMSLINRDQ) are periplasmic. A helical transmembrane segment spans residues 383 to 403 (ILAFTMGPAAFYFGAAVILTI). Topologically, residues 404 to 427 (LAVEWLDSRLLWDAHESGNARFDD) are cytoplasmic.

This sequence belongs to the PqiA family. In terms of assembly, may interact with LetB in the inner membrane.

It is found in the cell inner membrane. In terms of biological role, could be part, together with LetB, of a system that transports lipids between the inner membrane and the outer membrane. Contributes to membrane integrity. This chain is Lipophilic envelope-spanning tunnel protein A, found in Escherichia coli (strain K12).